Consider the following 129-residue polypeptide: Glycine cleavage system H protein (129 aa).

The 83-residue stretch at 24–106 (TYTVGITEHA…YAGGWIFKIK (83 aa)) folds into the Lipoyl-binding domain. Lys-65 is modified (N6-lipoyllysine).

The protein belongs to the GcvH family. In terms of assembly, the glycine cleavage system is composed of four proteins: P, T, L and H. The cofactor is (R)-lipoate.

The glycine cleavage system catalyzes the degradation of glycine. The H protein shuttles the methylamine group of glycine from the P protein to the T protein. In Citrobacter koseri (strain ATCC BAA-895 / CDC 4225-83 / SGSC4696), this protein is Glycine cleavage system H protein.